A 697-amino-acid polypeptide reads, in one-letter code: Probable potassium transporter 4 (697 aa).

Residues 1 to 29 (MSSSHTVTVSMDVEAGQKNKDKKGISQDL) lie on the Cytoplasmic side of the membrane. Residues 30 to 50 (ILAYKTLGVVFGGLVTSPLYV) traverse the membrane as a helical segment. At 51 to 66 (YPSMNLTNPTEEDYLG) the chain is on the extracellular side. A glycan (N-linked (GlcNAc...) asparagine) is linked at Asn-55. Residues 67 to 87 (IYSIMFWTLTLIGVVKYICIA) form a helical membrane-spanning segment. The Cytoplasmic portion of the chain corresponds to 88–152 (LNADDHGEGG…FIESSIIARR (65 aa)). The chain crosses the membrane as a helical span at residues 153–173 (LLLLTAILGMCMLIGDGILTP). At 174 to 189 (AISVLSAIDGLRGPFP) the chain is on the extracellular side. The chain crosses the membrane as a helical span at residues 190 to 210 (SVSKPAVEGLSAAILVGLFLL). At 211–217 (QKYGTSK) the chain is on the cytoplasmic side. A helical transmembrane segment spans residues 218-238 (VSFMFSPIMAAWTFATPVIGV). Residues 239–271 (YSIWRYYPGIFKAMSPHYIVRFFMTNQTRGWQL) are Extracellular-facing. A glycan (N-linked (GlcNAc...) asparagine) is linked at Asn-264. The helical transmembrane segment at 272 to 292 (LGGTVLCITGAEAMFADLGHF) threads the bilayer. Over 293-300 (SKRSIQIA) the chain is Cytoplasmic. A helical transmembrane segment spans residues 301 to 321 (FMSSIYPSLVLTYAGQTAYLI). The Extracellular segment spans residues 322-338 (NNVDDFSDGFYKFVPRP). Residues 339 to 359 (VYWPMFIIATLAAIVASQSLI) traverse the membrane as a helical segment. The Cytoplasmic segment spans residues 360 to 390 (SATFSVIKQSVVLDYFPRVKVVHTSKDKEGE). The helical transmembrane segment at 391–411 (VYSPETNYMLMLLCVGVILGF) threads the bilayer. Over 412 to 422 (GDGKDIGNAFG) the chain is Extracellular. A helical transmembrane segment spans residues 423 to 443 (VVVILVMLITTILLTLVMLII). The Cytoplasmic segment spans residues 444 to 447 (WGTH). A helical transmembrane segment spans residues 448–468 (VVLVALYLVPFLLLEATYVSA). Topologically, residues 469–475 (VCTKILR) are extracellular. Residues 476–496 (GGWVPFAVSVALAAVMFGWYY) traverse the membrane as a helical segment. The Cytoplasmic segment spans residues 497–697 (GRQRKTEYEA…RVEIGMLYKA (201 aa)).

It belongs to the HAK/KUP transporter (TC 2.A.72.3) family.

It localises to the membrane. Its function is as follows. High-affinity potassium transporter. The chain is Probable potassium transporter 4 (HAK4) from Oryza sativa subsp. japonica (Rice).